The chain runs to 309 residues: Hydroxyacylglutathione hydrolase, mitochondrial (309 aa).

Residues M1–G24 constitute a mitochondrion transit peptide. Position 90 is an N6-acetyllysine (K90). Residues H103, H105, D107, and H108 each contribute to the Zn(2+) site. N6-acetyllysine is present on K117. The Zn(2+) site is built by H159 and D183. Substrate-binding positions include K192–Y194 and H222–Y224. H222 serves as a coordination point for Zn(2+). Position 230 is an N6-acetyllysine; alternate (K230). At K230 the chain carries N6-succinyllysine; alternate. R298 to K301 is a substrate binding site.

It belongs to the metallo-beta-lactamase superfamily. Glyoxalase II family. In terms of assembly, monomer. It depends on Zn(2+) as a cofactor.

It localises to the mitochondrion matrix. The protein localises to the cytoplasm. It catalyses the reaction an S-(2-hydroxyacyl)glutathione + H2O = a 2-hydroxy carboxylate + glutathione + H(+). It carries out the reaction (R)-S-lactoylglutathione + H2O = (R)-lactate + glutathione + H(+). The protein operates within secondary metabolite metabolism; methylglyoxal degradation; (R)-lactate from methylglyoxal: step 2/2. Functionally, thiolesterase that catalyzes the hydrolysis of S-D-lactoyl-glutathione to form glutathione and D-lactic acid. The protein is Hydroxyacylglutathione hydrolase, mitochondrial (Hagh) of Mus musculus (Mouse).